Here is a 204-residue protein sequence, read N- to C-terminus: Guanylate kinase (204 aa).

The 179-residue stretch at 3-181 (GTLYIVSASS…AVSEMSAIFT (179 aa)) folds into the Guanylate kinase-like domain. 10 to 17 (ASSGTGKS) contributes to the ATP binding site.

The protein belongs to the guanylate kinase family.

It localises to the cytoplasm. The catalysed reaction is GMP + ATP = GDP + ADP. In terms of biological role, essential for recycling GMP and indirectly, cGMP. This Xylella fastidiosa (strain Temecula1 / ATCC 700964) protein is Guanylate kinase.